A 338-amino-acid chain; its full sequence is Homeobox protein ceh-20 (338 aa).

A PBC domain is found at 4-187 (THPANLSELL…VMILRSRFLD (184 aa)). The segment at 11–91 (ELLDAVLKIN…EGVAGPDKGG (81 aa)) is PBC-A. The PBC-B stretch occupies residues 94-187 (GSDASGGDQA…VMILRSRFLD (94 aa)). A DNA-binding region (homeobox; TALE-type) is located at residues 188 to 250 (ARRKRRNFSK…NKRIRYKKNM (63 aa)).

Belongs to the TALE/PBX homeobox family. Interacts with Meis protein psa-3. Interacts with homeobox protein nob-1. In terms of tissue distribution, expressed in head dopaminergic neurons.

It is found in the nucleus. In terms of biological role, transcription factor that binds to the 5'-TGATNNAT(G/T)(G/A)-3' PBC/Hox lineage enhancer region of sem-2 to promote cell fate specification in the postembryonic mesoderm (also known as the M lineage). Required for the M lineage-specific expression of the transcription factor, mls-2. Required for asymmetric division of the T hypodermal cell, probably acting via the regulation of asymmetric expression of Meis protein psa-3 in concert with homeobox protein nob-1 and the Wnt-MAPK pathway. Has a role in the mig-13 pathway to promote the guidance, migration and positioning of Q neuroblasts and their descendants along the anteroposterior body axis and the anterior migration of BDU interneurons. Also required for normal vulval formation. Plays a role in regulating gene expression in dopaminergic neurons, acting in midbody PDE neurons, and acting redundantly with ceh-40 in head neurons. May activate dopamine pathway genes in concert with ETS domain-containing protein ast-1, and homeobox proteins ceh-43 and ceh-40. The chain is Homeobox protein ceh-20 from Caenorhabditis elegans.